The following is a 536-amino-acid chain: SNW domain-containing protein 1 (536 aa).

A disordered region spans residues M1 to Y44. A2 bears the N-acetylalanine mark. Residue S14 is modified to Phosphoserine. Residues Q27–S36 are compositionally biased toward polar residues. An interaction with PPIL1 region spans residues G59–K79. Glycyl lysine isopeptide (Lys-Gly) (interchain with G-Cter in SUMO2) cross-links involve residues K81, K97, K115, K122, K141, K158, and K170. The tract at residues A174–K339 is SNW. Residues S182 and S190 each carry the phosphoserine modification. K193 participates in a covalent cross-link: Glycyl lysine isopeptide (Lys-Gly) (interchain with G-Cter in SUMO2). Residues F212 to P233 form a disordered region. Phosphoserine is present on residues S224, S232, and S234. Residues K240, K258, K286, K339, K344, K416, and K441 each participate in a glycyl lysine isopeptide (Lys-Gly) (interchain with G-Cter in SUMO2) cross-link. The interval K311 to R386 is disordered. Position 446 is a phosphoserine (S446). A Glycyl lysine isopeptide (Lys-Gly) (interchain with G-Cter in SUMO2) cross-link involves residue K452. Basic and acidic residues-rich tracts occupy residues I467 to E489 and K503 to G530. Residues I467–E536 are disordered. S479 and S481 each carry phosphoserine. K509 participates in a covalent cross-link: Glycyl lysine isopeptide (Lys-Gly) (interchain with G-Cter in SUMO2).

It belongs to the SNW family. Identified in the spliceosome C complex. Associates with U4/U6-U5 tri-small nuclear ribonucleoproteins (U4/U6-U5 tri-snRNPs). Component of the minor spliceosome, which splices U12-type introns. Interacts with SKI, SMAD2,SMAD3, RBPJ, RB1, PABPN1, MAGEA1, SIRT1, FOXN3, U2AF2, PPIL1, DAXX and ATP1B4. Interacts with VDR and RXRA; preferentially associates with VDR:RXRA heterodimers. Interacts with NCOR2. Interacts with MAML1. Interacts with NOTCH1 NICD; the interaction involves multimerized NOTCH1 NICD. Forms a complex with NOTCH1 NICD and MAML1; the association is dissociated by RBPJ. Associates with positive transcription elongation factor b (P-TEFb). Component of the SNARP complex which consists at least of SNIP1, SNW1, THRAP3, BCLAF1 and PNN.

It is found in the nucleus. Involved in pre-mRNA splicing as component of the spliceosome. As a component of the minor spliceosome, involved in the splicing of U12-type introns in pre-mRNAs. Required in the specific splicing of CDKN1A pre-mRNA; the function probably involves the recruitment of U2AF2 to the mRNA. May recruit PPIL1 to the spliceosome. May be involved in cyclin-D1/CCND1 mRNA stability through the SNARP complex which associates with both the 3'end of the CCND1 gene and its mRNA. Involved in transcriptional regulation. Modulates TGF-beta-mediated transcription via association with SMAD proteins, MYOD1-mediated transcription via association with PABPN1, RB1-mediated transcriptional repression, and retinoid-X receptor (RXR)- and vitamin D receptor (VDR)-dependent gene transcription in a cell line-specific manner probably involving coactivators NCOA1 and GRIP1. Is involved in NOTCH1-mediated transcriptional activation. Binds to multimerized forms of Notch intracellular domain (NICD) and is proposed to recruit transcriptional coactivators such as MAML1 to form an intermediate preactivation complex which associates with DNA-bound CBF-1/RBPJ to form a transcriptional activation complex by releasing SNW1 and redundant NOTCH1 NICD. The polypeptide is SNW domain-containing protein 1 (Snw1) (Mus musculus (Mouse)).